The sequence spans 141 residues: Hemoglobin subunit alpha (141 aa).

The Globin domain occupies Val-1–Arg-141. His-58 contacts O2. His-87 provides a ligand contact to heme b.

It belongs to the globin family. As to quaternary structure, heterotetramer of two alpha chains and two beta chains. Red blood cells.

Involved in oxygen transport from the lung to the various peripheral tissues. Has antimicrobial activity against B.subtilis ATCC 6633. Has antioxidant activity. The polypeptide is Hemoglobin subunit alpha (Crocodylus siamensis (Siamese crocodile)).